The primary structure comprises 339 residues: MSASGLPFDDFRELIRNLPGPDLGAERAVREREVTLTKPAGSLGRLEEIVAWLATWTGKRTPQVNRPLVAVFAGNHGVTAKNITPFPPSVTAQMVENFAAGGAAINQICIANDLGLKVFDLALEHPTGDITEEAAMDEHTCAATMAFGMEAIAGGTDLLCIGEMGIGNTTIAAAIALALFGGTAEDWVGPGTGSTGELMQRKLAAVRQAVALHQPHLQDPLEVLRCLGGREIAAMAGAILAARMEKIPVIVDGFVASAAAAVLYAANPEAIDHCMFGHVSAEPGHRKLLAKMGKEPLLDLGMRLGEGTGAALAANIVKAAALCHSGMATFEQAGVSASK.

E306 functions as the Proton acceptor in the catalytic mechanism.

It belongs to the CobT family.

It catalyses the reaction 5,6-dimethylbenzimidazole + nicotinate beta-D-ribonucleotide = alpha-ribazole 5'-phosphate + nicotinate + H(+). The protein operates within nucleoside biosynthesis; alpha-ribazole biosynthesis; alpha-ribazole from 5,6-dimethylbenzimidazole: step 1/2. Catalyzes the synthesis of alpha-ribazole-5'-phosphate from nicotinate mononucleotide (NAMN) and 5,6-dimethylbenzimidazole (DMB). The chain is Nicotinate-nucleotide--dimethylbenzimidazole phosphoribosyltransferase from Brucella abortus (strain S19).